The chain runs to 203 residues: FMN-dependent NADH:quinone oxidoreductase 1 (203 aa).

FMN is bound by residues serine 9, 15–17 (SAS), 95–98 (MYNF), and 139–142 (TAGG).

Belongs to the azoreductase type 1 family. Homodimer. The cofactor is FMN.

The catalysed reaction is 2 a quinone + NADH + H(+) = 2 a 1,4-benzosemiquinone + NAD(+). It catalyses the reaction N,N-dimethyl-1,4-phenylenediamine + anthranilate + 2 NAD(+) = 2-(4-dimethylaminophenyl)diazenylbenzoate + 2 NADH + 2 H(+). In terms of biological role, quinone reductase that provides resistance to thiol-specific stress caused by electrophilic quinones. Functionally, also exhibits azoreductase activity. Catalyzes the reductive cleavage of the azo bond in aromatic azo compounds to the corresponding amines. This chain is FMN-dependent NADH:quinone oxidoreductase 1, found in Pseudomonas putida (strain ATCC 47054 / DSM 6125 / CFBP 8728 / NCIMB 11950 / KT2440).